Here is a 586-residue protein sequence, read N- to C-terminus: Monoterpene synthase TPS4, chloroplastic (586 aa).

The transit peptide at 1-47 (MAATRNLSLLAQSSQPWAGIYGSHGSPRPISSWLRRQSIAKTSYICM) directs the protein to the chloroplast. Mg(2+)-binding residues include D340, D344, D485, T489, and E493. Positions 340–344 (DDIFD) match the DDXXD motif motif.

It belongs to the terpene synthase family. Tpsg subfamily. As to quaternary structure, monomer. Mg(2+) serves as cofactor.

It is found in the plastid. The protein resides in the chloroplast. The enzyme catalyses (2E)-geranyl diphosphate + H2O = (2E)-geraniol + diphosphate. It participates in secondary metabolite biosynthesis; terpenoid biosynthesis. Its function is as follows. Monoterpene synthase involved in the biosynthesis of volatile organic compounds. Mediates the conversion of (2E)-geranyl diphosphate (GPP) into the acyclic monoterpene, geraniol. Does not use (2E,6E)-farnesyl diphosphate (FPP) as substrate. The polypeptide is Monoterpene synthase TPS4, chloroplastic (Cananga odorata (Ylang-ylang tree)).